The following is a 181-amino-acid chain: Major urinary protein (181 aa).

The signal sequence occupies residues Met1–Ala19. Asn54 is a glycosylation site (N-linked (GlcNAc...) asparagine). A disulfide bond links Cys83 and Cys176.

This sequence belongs to the calycin superfamily. Lipocalin family. Abundant in the urine of adult male rats but absent from that of females.

The protein localises to the cytoplasm. It is found in the cytosol. It localises to the secreted. Major urinary proteins (Mups) bind and release pheromones. They may also protect pheromones from oxidation. In this context, they play a role in the regulation of social behaviors, such as aggression, mating, pup-suckling, territory establishment and dominance. Acts as a kairomone, detected by the prey vomeronasal organ and inducing fear reactions in mice. In Rattus norvegicus (Rat), this protein is Major urinary protein.